The primary structure comprises 710 residues: DNA ligase (710 aa).

The tract at residues M1–R26 is disordered. Residues D53–D57, S102–L103, and E132 contribute to the NAD(+) site. K134 functions as the N6-AMP-lysine intermediate in the catalytic mechanism. Residues R155, E196, K312, and K336 each coordinate NAD(+). The Zn(2+) site is built by C430, C433, C449, and C455. Positions E619–V708 constitute a BRCT domain.

Belongs to the NAD-dependent DNA ligase family. LigA subfamily. The cofactor is Mg(2+). Mn(2+) is required as a cofactor.

It catalyses the reaction NAD(+) + (deoxyribonucleotide)n-3'-hydroxyl + 5'-phospho-(deoxyribonucleotide)m = (deoxyribonucleotide)n+m + AMP + beta-nicotinamide D-nucleotide.. DNA ligase that catalyzes the formation of phosphodiester linkages between 5'-phosphoryl and 3'-hydroxyl groups in double-stranded DNA using NAD as a coenzyme and as the energy source for the reaction. It is essential for DNA replication and repair of damaged DNA. This chain is DNA ligase, found in Salinispora arenicola (strain CNS-205).